The chain runs to 451 residues: uncharacterized protein (451 aa).

Residues 29-204 (LERYPDIIVF…TSMTFKAVPI (176 aa)) enclose the FAD-binding PCMH-type domain. A Pros-8alpha-FAD histidine modification is found at His66.

This sequence belongs to the oxygen-dependent FAD-linked oxidoreductase family. Requires FAD as cofactor.

This is an uncharacterized protein from Bacillus subtilis (strain 168).